The following is a 501-amino-acid chain: Raftlin-2 (501 aa).

Disordered regions lie at residues 1–20 (MGCGLRKLEDPDDSSPGKIF) and 196–238 (SWNE…SRKG). Gly-2 carries N-myristoyl glycine lipidation. Cys-3 carries S-palmitoyl cysteine lipidation. Polar residues predominate over residues 224 to 233 (MEQNGSPSSS). The residue at position 405 (Ser-405) is a Phosphoserine. The disordered stretch occupies residues 407–454 (AQTTDKKASRRIKGEDKNKATSRSIGLDTTTPQPAESRHPPEECRLSP). Thr-409 carries the post-translational modification Phosphothreonine. The segment covering 410–425 (TDKKASRRIKGEDKNK) has biased composition (basic and acidic residues). Residues 427-440 (TSRSIGLDTTTPQP) are compositionally biased toward polar residues. Ser-430 is modified (phosphoserine). Basic and acidic residues predominate over residues 442–451 (ESRHPPEECR).

The protein belongs to the raftlin family.

It localises to the cell membrane. Functionally, upon bacterial lipopolysaccharide stimulation, mediates clathrin-dependent internalization of TLR4 in dendritic cells, resulting in activation of TICAM1-mediated signaling and subsequent IFNB1 production. May regulate B-cell antigen receptor mediated-signaling. This chain is Raftlin-2 (RFTN2), found in Pongo abelii (Sumatran orangutan).